We begin with the raw amino-acid sequence, 433 residues long: Serine hydroxymethyltransferase (433 aa).

121 to 123 is a (6S)-5,6,7,8-tetrahydrofolate binding site; that stretch reads AHV. Lys-227 carries the N6-(pyridoxal phosphate)lysine modification. Glu-243 serves as a coordination point for (6S)-5,6,7,8-tetrahydrofolate.

It belongs to the SHMT family. In terms of assembly, homodimer. Pyridoxal 5'-phosphate is required as a cofactor.

It localises to the cytoplasm. It participates in amino-acid biosynthesis; glycine biosynthesis; glycine from L-serine: step 1/1. Catalyzes the reversible interconversion of serine and glycine with a modified folate serving as the one-carbon carrier. Also exhibits a pteridine-independent aldolase activity toward beta-hydroxyamino acids, producing glycine and aldehydes, via a retro-aldol mechanism. In Saccharolobus islandicus (strain Y.N.15.51 / Yellowstone #2) (Sulfolobus islandicus), this protein is Serine hydroxymethyltransferase.